A 361-amino-acid chain; its full sequence is MILDSTLREGEQTPGVNYSPEQRLRIALALDEIGVDFIEVGHPAVSKDVFIGIKLIASQDLNANLLAHSRALLEDIDYVIQADVEWVGIFFCLSNACLRKRFRMSLSQALERISKAIEYAKDHGLKVRFTPEDTTRTEWENLRRAIELAKELKVDRISVADTTGGTHPLRFYTLVKKVVNFGIPVNVHCHNDLGLALANAIMGIEGGATVVDATVNGLGERAGIVDLAQIVTVLYYHYGVKKYRLDKLYEISRMVSEITGIALQPNYPIVGENAFTHKAGLHVSAVLKDPRFYEFLPAEVFGRERTIYVDRFAGKDTIRYYLQKLGINDEEFVKVLLKRVKSSREPFTWDKFIEEVRRLKT.

One can recognise a Pyruvate carboxyltransferase domain in the interval 1 to 249; sequence MILDSTLREG…VKKYRLDKLY (249 aa). Arg8 provides a ligand contact to 2-oxoglutarate. Position 9 (Glu9) interacts with Mg(2+). 3 residues coordinate 2-oxoglutarate: His68, Arg128, and Thr162. His188 and His190 together coordinate Mg(2+). Residue His282 is the Proton acceptor of the active site.

This sequence belongs to the alpha-IPM synthase/homocitrate synthase family. Homocitrate synthase LYS20/LYS21 subfamily. Mg(2+) serves as cofactor. The cofactor is Mn(2+).

It carries out the reaction acetyl-CoA + 2-oxoglutarate + H2O = (2R)-homocitrate + CoA + H(+). It functions in the pathway amino-acid biosynthesis; L-lysine biosynthesis via AAA pathway; L-alpha-aminoadipate from 2-oxoglutarate: step 1/5. Functionally, catalyzes the aldol-type condensation of 2-oxoglutarate with acetyl-CoA to yield homocitrate. Carries out the first step of the alpha-aminoadipate (AAA) lysine biosynthesis pathway. This chain is Homocitrate synthase, found in Pyrococcus horikoshii (strain ATCC 700860 / DSM 12428 / JCM 9974 / NBRC 100139 / OT-3).